The chain runs to 77 residues: Small ribosomal subunit protein bS20 (77 aa).

The protein belongs to the bacterial ribosomal protein bS20 family.

Functionally, binds directly to 16S ribosomal RNA. The sequence is that of Small ribosomal subunit protein bS20 from Lactococcus lactis subsp. cremoris (strain MG1363).